Consider the following 276-residue polypeptide: Undecaprenyl-diphosphatase (276 aa).

A run of 7 helical transmembrane segments spans residues 1-21, 39-59, 84-104, 115-135, 188-208, 222-242, and 253-273; these read MSWL…FLPV, AGAS…LVYF, YWLG…GLLF, LWLV…AEYY, FGFL…LPDA, QLFV…AWFL, and FVGY…AGVV.

Belongs to the UppP family.

Its subcellular location is the cell membrane. The enzyme catalyses di-trans,octa-cis-undecaprenyl diphosphate + H2O = di-trans,octa-cis-undecaprenyl phosphate + phosphate + H(+). Functionally, catalyzes the dephosphorylation of undecaprenyl diphosphate (UPP). Confers resistance to bacitracin. The polypeptide is Undecaprenyl-diphosphatase (Mycolicibacterium vanbaalenii (strain DSM 7251 / JCM 13017 / BCRC 16820 / KCTC 9966 / NRRL B-24157 / PYR-1) (Mycobacterium vanbaalenii)).